A 672-amino-acid polypeptide reads, in one-letter code: Spermatid perinuclear RNA-binding protein (672 aa).

Positions 5–362 constitute a DZF domain; sequence RSFANDDRHV…ALKRPFEDGV (358 aa). Positions 348–370 are disordered; that stretch reads GTGSSALKRPFEDGVGDDKDPNK. Basic and acidic residues predominate over residues 356–370; sequence RPFEDGVGDDKDPNK. One can recognise a DRBM 1 domain in the interval 386–452; it reads DLMNALMRLN…AVKVLQAMGY (67 aa). A disordered region spans residues 463 to 494; that stretch reads VSSDEKSDNEGKNETVSSISSNNTGNSTADTS. The segment covering 465–475 has biased composition (basic and acidic residues); the sequence is SDEKSDNEGKN. Low complexity predominate over residues 477–490; the sequence is TVSSISSNNTGNST. The region spanning 509 to 575 is the DRBM 2 domain; sequence SGKNPVMELN…ALAALEKLFS (67 aa).

The protein localises to the cytoplasm. Functionally, may be involved in normal spermatogenesis and sperm function. Binds to double-stranded DNA and RNA. This is Spermatid perinuclear RNA-binding protein (STRBP) from Gallus gallus (Chicken).